Consider the following 123-residue polypeptide: MGNRVCCGGSWSCPSTFQKKKKTGSQTRRTLKPQPQQLQQNLPKGHETTGHTYERVLQQQGSQERSPGLMSEDSNLHYADIQVCSRPHAREVKHVHLENATEYATLRFPQATPRYDSKNGTLV.

Positions 17–74 (FQKKKKTGSQTRRTLKPQPQQLQQNLPKGHETTGHTYERVLQQQGSQERSPGLMSEDS) are disordered. T30 is modified (phosphothreonine). Low complexity predominate over residues 32–43 (KPQPQQLQQNLP). Residues 44 to 54 (KGHETTGHTYE) are compositionally biased toward basic and acidic residues. Position 62 is a phosphoserine (S62).

This is an uncharacterized protein from Homo sapiens (Human).